The following is a 645-amino-acid chain: MMAAEIPRVTTPLSPLVQVPQEEDRQKEEVTTMILEDDSWVQEAVLQEDGPESEPFPQSAGKGSPQEEVTRGPQGALGRLRELCRRWLRPEVHTKEQMLTMLPKEIQAWLQEHRPESSEEAAALVEDLTQTLQDSGSQCVHQPFSVLTVCTVSSRTAWRVLELHLNYFEIQSENGENCNQDMFENESREIFSEMPEGESAQHSDGESDFERDAGIQRPQGHTPGKDHGEVLSQDREVGQLIGLQGTYLGEKPYECPQCGKTFSRKSHLITHERTHTGEKYYKCDECGKSFSDGSNFSRHQTTHTGEKPYKCRDCGKSFSRSANLITHQRIHTGEKPFQCAECGKSFSRSPNLIAHQRTHTGEKPYSCPECGKSFGNRSSLNTHQGIHTGEKPYECKECGESFSYNSNLIRHQRIHTGEKPYKCTDCGQRFSQSSALITHRRTHTGEKPYQCSECGKNFSRSSNLATHRRTHMVEKPYKCGVCGKSFSQSSSLIAHQGMHTGEKPYECLTCGESFSWSSNLLKHQRIHTGEKPYKCSECGKCFSQRSQLVVHQQTHTGEKPYKCLMCGKSFSRGSILVMHQRAHLGDKPYRCPECGKGFSWNSVLIIHQRIHTGEKPYKCPECGKGFSNSSNFITHQRTHMKEKLY.

3 disordered regions span residues methionine 1–arginine 25, aspartate 37–glycine 75, and glutamate 193–valine 230. The 74-residue stretch at serine 59 to leucine 132 folds into the SCAN box domain. Residues serine 199–glycine 214 are compositionally biased toward basic and acidic residues. C2H2-type zinc fingers lie at residues tyrosine 253–histidine 275, tyrosine 281–histidine 303, tyrosine 309–histidine 331, phenylalanine 337–histidine 359, tyrosine 365–histidine 387, tyrosine 393–histidine 415, tyrosine 421–histidine 443, tyrosine 449–histidine 471, tyrosine 477–histidine 499, tyrosine 505–histidine 527, tyrosine 533–histidine 555, tyrosine 561–histidine 583, tyrosine 589–histidine 611, and tyrosine 617–histidine 639.

The protein belongs to the krueppel C2H2-type zinc-finger protein family.

The protein localises to the nucleus. May be involved in transcriptional regulation during the post-meiotic stages of spermatogenesis. This chain is Zinc finger and SCAN domain-containing protein 2 (ZSCAN2), found in Pongo abelii (Sumatran orangutan).